The following is a 476-amino-acid chain: MPLAEGSTFAGFTIVRQLGSGGMGEVYLARHPRLPRQDALKVLRADVSADGEYRARFNREADAAASLWHPHIVAVHDRGEFDGQLWIDMDFVDGTDTVSLLRDRYPNGMPGPEVTEIITAVAEALDYAHERRLLHRDVKPANILIANPDSPDRRIMLADFGIAGWVDDPSGLTATNMTVGTVSYAAPEQLMGNELDGRADQYALAATAFHLLTGSPPFQHANPAVVISQHLSASPPAIGDRVPELTPLDPVFAKALAKQPKDRYQRCVDFARALGHRLGGAGDPDDTRVSQPVAVAAPAKRSLLRTAVIVPAVLAMLLVMAVAVAVREFQRADDERAAQPARTRTTTSAGTTTSVAPASTTRPAPTTPTTTGAADTATASPTAAVVAIGALCFPLGSTGTTKTGATAYCSTLQGTNTTIWSLTEDTVASPTVTATADPTEAPLPIEQESPIRVCMQQTGQTRRECREEIRRSNGWP.

One can recognise a Protein kinase domain in the interval 12 to 279 (FTIVRQLGSG…FARALGHRLG (268 aa)). ATP-binding positions include 18-26 (LGSGGMGEV) and Lys41. Catalysis depends on Asp137, which acts as the Proton acceptor. The helical transmembrane segment at 306-326 (TAVIVPAVLAMLLVMAVAVAV) threads the bilayer. The tract at residues 332-376 (ADDERAAQPARTRTTTSAGTTTSVAPASTTRPAPTTPTTTGAADT) is disordered. Residues 338–376 (AQPARTRTTTSAGTTTSVAPASTTRPAPTTPTTTGAADT) show a composition bias toward low complexity.

It belongs to the protein kinase superfamily. Ser/Thr protein kinase family. Post-translationally, autophosphorylated. Dephosphorylated by PstP.

It localises to the cell membrane. It carries out the reaction L-seryl-[protein] + ATP = O-phospho-L-seryl-[protein] + ADP + H(+). It catalyses the reaction L-threonyl-[protein] + ATP = O-phospho-L-threonyl-[protein] + ADP + H(+). Its function is as follows. A serine/threonine-protein kinase, acts on HupB in vitro. The protein is Serine/threonine-protein kinase PknF of Mycobacterium tuberculosis (strain ATCC 25177 / H37Ra).